Here is a 105-residue protein sequence, read N- to C-terminus: Small ribosomal subunit protein uS10 (105 aa).

This sequence belongs to the universal ribosomal protein uS10 family. Part of the 30S ribosomal subunit.

Functionally, involved in the binding of tRNA to the ribosomes. The protein is Small ribosomal subunit protein uS10 of Agathobacter rectalis (strain ATCC 33656 / DSM 3377 / JCM 17463 / KCTC 5835 / VPI 0990) (Eubacterium rectale).